We begin with the raw amino-acid sequence, 144 residues long: Small ribosomal subunit protein uS12 (144 aa).

Positions 1 to 55 (MPTINQLVRKGREDKVVKSKSPALQKGYNSFKKSQTNQSSPQKRGVCTRVGTMTP) are disordered. The span at 27-42 (GYNSFKKSQTNQSSPQ) shows a compositional bias: polar residues. Position 102 is a 3-methylthioaspartic acid (Asp-102). The interval 119 to 144 (GVNNRKQGRSKYGTKRPKPGQAAAKK) is disordered. Residues 124–144 (KQGRSKYGTKRPKPGQAAAKK) are compositionally biased toward basic residues.

This sequence belongs to the universal ribosomal protein uS12 family. In terms of assembly, part of the 30S ribosomal subunit. Contacts proteins S8 and S17. May interact with IF1 in the 30S initiation complex.

With S4 and S5 plays an important role in translational accuracy. In terms of biological role, interacts with and stabilizes bases of the 16S rRNA that are involved in tRNA selection in the A site and with the mRNA backbone. Located at the interface of the 30S and 50S subunits, it traverses the body of the 30S subunit contacting proteins on the other side and probably holding the rRNA structure together. The combined cluster of proteins S8, S12 and S17 appears to hold together the shoulder and platform of the 30S subunit. This chain is Small ribosomal subunit protein uS12, found in Brevibacillus brevis (strain 47 / JCM 6285 / NBRC 100599).